A 314-amino-acid polypeptide reads, in one-letter code: Methionyl-tRNA formyltransferase (314 aa).

Ser113 to Pro116 provides a ligand contact to (6S)-5,6,7,8-tetrahydrofolate.

The protein belongs to the Fmt family.

The enzyme catalyses L-methionyl-tRNA(fMet) + (6R)-10-formyltetrahydrofolate = N-formyl-L-methionyl-tRNA(fMet) + (6S)-5,6,7,8-tetrahydrofolate + H(+). Attaches a formyl group to the free amino group of methionyl-tRNA(fMet). The formyl group appears to play a dual role in the initiator identity of N-formylmethionyl-tRNA by promoting its recognition by IF2 and preventing the misappropriation of this tRNA by the elongation apparatus. This is Methionyl-tRNA formyltransferase from Ectopseudomonas mendocina (strain ymp) (Pseudomonas mendocina).